Consider the following 230-residue polypeptide: Small ribosomal subunit protein uS3 (230 aa).

The KH type-2 domain occupies 39-107; that stretch reads VRNYLFKKLI…PVHINIEEIK (69 aa).

Belongs to the universal ribosomal protein uS3 family. As to quaternary structure, part of the 30S ribosomal subunit. Forms a tight complex with proteins S10 and S14.

Functionally, binds the lower part of the 30S subunit head. Binds mRNA in the 70S ribosome, positioning it for translation. The sequence is that of Small ribosomal subunit protein uS3 from Vesicomyosocius okutanii subsp. Calyptogena okutanii (strain HA).